A 367-amino-acid chain; its full sequence is Glutamate 5-kinase (367 aa).

Lys-10 contributes to the ATP binding site. The substrate site is built by Ser-50, Asp-137, and Asn-149. Residues 169–170 and 211–217 each bind ATP; these read TD and TGGMGTK. In terms of domain architecture, PUA spans 275–353; it reads AGEITVDDGA…QEISEILGYE (79 aa).

It belongs to the glutamate 5-kinase family.

The protein resides in the cytoplasm. The enzyme catalyses L-glutamate + ATP = L-glutamyl 5-phosphate + ADP. Its pathway is amino-acid biosynthesis; L-proline biosynthesis; L-glutamate 5-semialdehyde from L-glutamate: step 1/2. With respect to regulation, proline-mediated feedback inhibition. Functionally, catalyzes the transfer of a phosphate group to glutamate to form L-glutamate 5-phosphate. The chain is Glutamate 5-kinase from Serratia marcescens.